An 84-amino-acid chain; its full sequence is UPF0512 protein O (84 aa).

This sequence belongs to the UPF0512 family.

This is UPF0512 protein O from Dictyostelium discoideum (Social amoeba).